A 189-amino-acid chain; its full sequence is Translation initiation factor IF-3 (189 aa).

This sequence belongs to the IF-3 family. Monomer.

Its subcellular location is the cytoplasm. In terms of biological role, IF-3 binds to the 30S ribosomal subunit and shifts the equilibrium between 70S ribosomes and their 50S and 30S subunits in favor of the free subunits, thus enhancing the availability of 30S subunits on which protein synthesis initiation begins. This chain is Translation initiation factor IF-3, found in Corynebacterium glutamicum (strain ATCC 13032 / DSM 20300 / JCM 1318 / BCRC 11384 / CCUG 27702 / LMG 3730 / NBRC 12168 / NCIMB 10025 / NRRL B-2784 / 534).